We begin with the raw amino-acid sequence, 251 residues long: 3-deoxy-manno-octulosonate cytidylyltransferase (251 aa).

Belongs to the KdsB family.

It is found in the cytoplasm. The catalysed reaction is 3-deoxy-alpha-D-manno-oct-2-ulosonate + CTP = CMP-3-deoxy-beta-D-manno-octulosonate + diphosphate. It functions in the pathway nucleotide-sugar biosynthesis; CMP-3-deoxy-D-manno-octulosonate biosynthesis; CMP-3-deoxy-D-manno-octulosonate from 3-deoxy-D-manno-octulosonate and CTP: step 1/1. The protein operates within bacterial outer membrane biogenesis; lipopolysaccharide biosynthesis. Activates KDO (a required 8-carbon sugar) for incorporation into bacterial lipopolysaccharide in Gram-negative bacteria. The sequence is that of 3-deoxy-manno-octulosonate cytidylyltransferase from Sodalis glossinidius (strain morsitans).